The sequence spans 503 residues: MALRAKAEVCVAAPWLSLQRARALGTRAARAPRTVLPFEAMPQHPGNRWLRLLQIWREQGYEHLHLEMHQTFQELGPIFRYNLGGPRMVCVMLPEDVEKLQQVDSLHPCRMILEPWVAYRQHRGHKCGVFLLNGPEWRFNRLRLNPDVLSPKAVQRFLPMVDAVARDFSQALKKKVLQNARGSLTLDVQPSIFHYTIEASNLALFGERLGLVGHSPSSASLNFLHALEVMFKSTVQLMFMPRSLSRWISPKVWKEHFEAWDCIFQYGDNCIQKIYQELAFNRPQHYTGIVAELLLKAELSLEAIKANSMELTAGSVDTTAFPLLMTLFELARNPDVQQILRQESLAAAASISEHPQKATTELPLLRAALKETLRLYPVGLFLERVVSSDLVLQNYHIPAGTLVQVFLYSLGRNAALFPRPERYNPQRWLDIRGSGRNFHHVPFGFGMRQCLGRRLAEAEMLLLLHHVLKHFLVETLTQEDIKMVYSFILRPGTSPLLTFRAIN.

Residues 1 to 24 (MALRAKAEVCVAAPWLSLQRARAL) constitute a mitochondrion transit peptide. Residue phenylalanine 381 participates in 21-hydroxyprogesterone binding. A heme-binding site is contributed by cysteine 450.

This sequence belongs to the cytochrome P450 family. Heme serves as cofactor. In terms of tissue distribution, expressed sporadically in the zona glomerulosa (zG) of the adrenal cortex (conventional zonation), as well as in aldosterone-producing cell clusters (APCCs) composed of morphological zG cells in contact with the capsule (variegated zonation).

It is found in the mitochondrion inner membrane. The catalysed reaction is a steroid + 2 reduced [adrenodoxin] + O2 + 2 H(+) = an 11beta-hydroxysteroid + 2 oxidized [adrenodoxin] + H2O. The enzyme catalyses 21-hydroxyprogesterone + 2 reduced [adrenodoxin] + O2 + 2 H(+) = corticosterone + 2 oxidized [adrenodoxin] + H2O. It catalyses the reaction corticosterone + 2 reduced [adrenodoxin] + O2 + 2 H(+) = 18-hydroxycorticosterone + 2 oxidized [adrenodoxin] + H2O. It carries out the reaction 18-hydroxycorticosterone + 2 reduced [adrenodoxin] + O2 + 2 H(+) = aldosterone + 2 oxidized [adrenodoxin] + 2 H2O. The catalysed reaction is 11-deoxycortisol + 2 reduced [adrenodoxin] + O2 + 2 H(+) = cortisol + 2 oxidized [adrenodoxin] + H2O. The enzyme catalyses 21-hydroxyprogesterone + 2 reduced [adrenodoxin] + O2 + 2 H(+) = 18-hydroxy-11-deoxycorticosterone + 2 oxidized [adrenodoxin] + H2O. It catalyses the reaction cortisol + 2 reduced [adrenodoxin] + O2 + 2 H(+) = 18-hydroxycortisol + 2 oxidized [adrenodoxin] + H2O. It carries out the reaction 18-hydroxycortisol + 2 reduced [adrenodoxin] + O2 + 2 H(+) = 18-oxocortisol + 2 oxidized [adrenodoxin] + 2 H2O. It participates in steroid biosynthesis. Its function is as follows. A cytochrome P450 monooxygenase that catalyzes the biosynthesis of aldosterone, the main mineralocorticoid in the human body responsible for salt and water homeostasis, thus involved in blood pressure regulation, arterial hypertension, and the development of heart failure. Catalyzes three sequential oxidative reactions of 11-deoxycorticosterone (21-hydroxyprogesterone), namely 11-beta hydroxylation, followed by two successive oxidations at C18 yielding 18-hydroxy and then 18-oxo intermediates (that would not leave the enzyme active site during the consecutive hydroxylation reactions), ending with the formation of aldosterone. Can also produce 18-hydroxycortisol and 18-oxocortisol, derived from successive oxidations of cortisol at C18, normally found at very low levels, but significantly increased in primary aldosteronism, the most common form of secondary hypertension. Mechanistically, uses molecular oxygen inserting one oxygen atom into a substrate and reducing the second into a water molecule. Two electrons are provided by NADPH via a two-protein mitochondrial transfer system comprising flavoprotein FDXR (adrenodoxin/ferredoxin reductase) and nonheme iron-sulfur protein FDX1 or FDX2 (adrenodoxin/ferredoxin). Could also be involved in the androgen metabolic pathway. This Homo sapiens (Human) protein is Cytochrome P450 11B2, mitochondrial.